A 527-amino-acid polypeptide reads, in one-letter code: Catalase (527 aa).

Basic and acidic residues predominate over residues 1-22 (MADSRDPASDQMKQWKEQRAPQ). Residues 1–34 (MADSRDPASDQMKQWKEQRAPQKPDVLTTGGGNP) form a disordered region. At A2 the chain carries N-acetylalanine. S9 carries the phosphoserine modification. Position 13 is an N6-succinyllysine (K13). Active-site residues include H75 and N148. NADP(+) is bound by residues H194, S201, R203, and N213. An N6-succinyllysine modification is found at K221. K233 is modified (N6-acetyllysine). NADP(+)-binding residues include K237, W303, H305, and K306. Position 306 is an N6-acetyllysine; alternate (K306). An N6-succinyllysine; alternate modification is found at K306. Heme is bound at residue Y358. A phosphoserine mark is found at S417 and S434. K449 and K480 each carry N6-acetyllysine; alternate. 2 positions are modified to N6-succinyllysine; alternate: K449 and K480. T511 is modified (phosphothreonine). S517 bears the Phosphoserine mark. Position 522 is an N6-succinyllysine (K522). Positions 524-527 (KANL) match the Microbody targeting signal; atypical motif.

Belongs to the catalase family. In terms of assembly, homotetramer. Interacts (via microbody targeting signal) with PEX5, monomeric form interacts with PEX5, leading to its translocation into peroxisomes. It depends on heme as a cofactor. NADP(+) is required as a cofactor. As to expression, expressed in renal proximal tubules (at protein level).

It localises to the peroxisome matrix. It carries out the reaction 2 H2O2 = O2 + 2 H2O. Functionally, catalyzes the degradation of hydrogen peroxide (H(2)O(2)) generated by peroxisomal oxidases to water and oxygen, thereby protecting cells from the toxic effects of hydrogen peroxide. Promotes growth of cells including T-cells, B-cells, myeloid leukemia cells, melanoma cells, mastocytoma cells and normal and transformed fibroblast cells. The polypeptide is Catalase (Cat) (Rattus norvegicus (Rat)).